We begin with the raw amino-acid sequence, 917 residues long: Bifunctional aspartokinase/homoserine dehydrogenase 2, chloroplastic (917 aa).

The transit peptide at 1 to 89 directs the protein to the chloroplast; it reads MQGLAVSCQL…EVNTYLPKGD (89 aa). An aspartokinase region spans residues 90–338; sequence MWSVHKFGGT…VSEAVILSTL (249 aa). The interface stretch occupies residues 339-563; sequence SYQEAWEMSY…LSKTTLAVGI (225 aa). 2 ACT domains span residues 413-488 and 494-571; these read VEGT…VING and AVGL…LIGG. The homoserine dehydrogenase stretch occupies residues 564 to 917; that stretch reads IGPGLIGGAL…RLASYLGAPS (354 aa). The NAD(+) site is built by I569 and T650. The NADP(+) site is built by I569, T650, and K674. NADPH is bound by residues I569, T650, and K674. E701, V704, A706, and L708 together coordinate Na(+). The NADP(+) site is built by G759 and E762. Residues E762 and D773 each contribute to the L-homoserine site. The active-site Proton donor is K777. G894 is a binding site for NAD(+). G894 is an NADP(+) binding site. Position 894 (G894) interacts with NADPH.

It in the N-terminal section; belongs to the aspartokinase family. The protein in the C-terminal section; belongs to the homoserine dehydrogenase family. In terms of assembly, homo- or heterodimer. A metal cation is required as a cofactor.

It localises to the plastid. Its subcellular location is the chloroplast. It catalyses the reaction L-homoserine + NADP(+) = L-aspartate 4-semialdehyde + NADPH + H(+). The catalysed reaction is L-homoserine + NAD(+) = L-aspartate 4-semialdehyde + NADH + H(+). The enzyme catalyses L-aspartate + ATP = 4-phospho-L-aspartate + ADP. Its pathway is amino-acid biosynthesis; L-lysine biosynthesis via DAP pathway; (S)-tetrahydrodipicolinate from L-aspartate: step 1/4. It functions in the pathway amino-acid biosynthesis; L-methionine biosynthesis via de novo pathway; L-homoserine from L-aspartate: step 1/3. It participates in amino-acid biosynthesis; L-methionine biosynthesis via de novo pathway; L-homoserine from L-aspartate: step 3/3. The protein operates within amino-acid biosynthesis; L-threonine biosynthesis; L-threonine from L-aspartate: step 1/5. Its pathway is amino-acid biosynthesis; L-threonine biosynthesis; L-threonine from L-aspartate: step 3/5. Functionally, bifunctional aspartate kinase and homoserine dehydrogenase that catalyzes the first and the third steps toward the synthesis of lysine, methionine and threonine from aspartate. The protein is Bifunctional aspartokinase/homoserine dehydrogenase 2, chloroplastic (AKHSDH2) of Zea mays (Maize).